Here is a 944-residue protein sequence, read N- to C-terminus: MKPFSKNDRRRWSFDSVSAGKTAVGSASTSPGTEYSINGDQEFVEVTIDLQDDDTIVLRSVEPATAINVIGDISDDNTGIMTPVSISRSPTMKRTSSNRFRQFSQELKAEAVAKAKQLSQELKRFSWSRSFSGNLTTTSTAANQSGGAGGGLVNSALEARALRKQRAQLDRTRSSAQRALRGLRFISNKQKNVDGWNDVQSNFEKFEKNGYIYRSDFAQCIGMKDSKEFALELFDALSRRRRLKVEKINHDELYEYWSQINDESFDSRLQIFFDIVDKNEDGRITEEEVKEIIMLSASANKLSRLKEQAEEYAALIMEELDPERLGYIELWQLETLLLQKDTYLNYSQALSYTSQALSQNLQGLRGKSRIHRMSSDFVYIMQENWKRIWVLSLWIMIMIGLFLWKFFQYKQKDAFHVMGYCLLTAKGAAETLKFNMALILFPVCRNTITWLRSTRLSYFVPFDDNINFHKTIAGAIVVAVILHIGDHLACDFPRIVRATEYDYNRYLFHYFQTKQPTYFDLVKGPEGITGILMVILMIISFTLATRWFRRNLVKLPKPFDRLTGFNAFWYSHHLFVIVYILLILHGIFLYFAKPWYVRTTWMYLAVPVLLYGGERTLRYFRSGSYSVRLLKVAIYPGNVLTLQMSKPTQFRYKSGQYMFVQCPAVSPFEWHPFSITSAPEDDYISIHIRQLGDWTQELKRVFSEVCEPPVGGKSGLLRADETTKKSLPKLLIDGPYGAPAQDYRKYDVLLLVGLGIGATPFISILKDLLNNIVKMEEHADSISDFSRSSEYSTGSNGDTPRRKRILKTTNAYFYWVTREQGSFDWFKGVMNEVAELDQRGVIEMHNYLTSVYEEGDARSALITMVQALNHAKNGVDIVSGTRVRTHFARPNWKKVLTKLSSKHCNARIGVFYCGVPVLGKELSKLCNTFNQKGSTKFEFHKEHF.

Residues 2 to 387 (KPFSKNDRRR…VYIMQENWKR (386 aa)) are Cytoplasmic-facing. Coiled coils occupy residues 102–126 (QFSQ…KRFS) and 157–184 (LEAR…RGLR). 2 EF-hand-like regions span residues 207–215 (EKNGYIYRS) and 241–252 (RRLKVEKINHDE). 2 consecutive EF-hand domains span residues 264-299 (SFDS…SASA) and 308-343 (QAEE…KDTY). D277, N279, D281, R283, E288, D321, and Y327 together coordinate Ca(2+). S354 and S358 each carry phosphoserine. The helical transmembrane segment at 388–408 (IWVLSLWIMIMIGLFLWKFFQ) threads the bilayer. The Extracellular portion of the chain corresponds to 409 to 475 (YKQKDAFHVM…INFHKTIAGA (67 aa)). Residues 426–583 (KGAAETLKFN…LFVIVYILLI (158 aa)) form the Ferric oxidoreductase domain. A helical transmembrane segment spans residues 476–492 (IVVAVILHIGDHLACDF). Over 493–527 (PRIVRATEYDYNRYLFHYFQTKQPTYFDLVKGPEG) the chain is Cytoplasmic. Residues 528–548 (ITGILMVILMIISFTLATRWF) traverse the membrane as a helical segment. At 549–570 (RRNLVKLPKPFDRLTGFNAFWY) the chain is on the extracellular side. A helical membrane pass occupies residues 571–591 (SHHLFVIVYILLILHGIFLYF). Residues 592 to 599 (AKPWYVRT) are Cytoplasmic-facing. The helical transmembrane segment at 600-617 (TWMYLAVPVLLYGGERTL) threads the bilayer. Over 618–744 (RYFRSGSYSV…PYGAPAQDYR (127 aa)) the chain is Extracellular. In terms of domain architecture, FAD-binding FR-type spans 622 to 742 (SGSYSVRLLK…DGPYGAPAQD (121 aa)). Residues 745 to 765 (KYDVLLLVGLGIGATPFISIL) form a helical membrane-spanning segment. Topologically, residues 766-944 (KDLLNNIVKM…TKFEFHKEHF (179 aa)) are cytoplasmic.

Belongs to the RBOH (TC 5.B.1.3) family. As to quaternary structure, monomer and homodimer. Interacts (via N-terminus) with CIPK26. Interacts (via N-terminus) with SRC2. Not glycosylated. Phosphorylated by CIPK26. Expressed in roots, stems, seedlings, inflorescences, leaves and guard cells.

It localises to the cell membrane. Inhibited by diphenylene iodonium (DPI). Functionally, calcium-dependent NADPH oxidase that generates superoxide. Generates reactive oxygen species (ROS) during incompatible interactions with pathogens and is important in the regulation of the hypersensitive response (HR). Involved in abscisic acid-induced stomatal closing and in UV-B and abscisic acid ROS-dependent signaling. This chain is Respiratory burst oxidase homolog protein F (RBOHF), found in Arabidopsis thaliana (Mouse-ear cress).